A 209-amino-acid polypeptide reads, in one-letter code: Uracil phosphoribosyltransferase (209 aa).

5-phospho-alpha-D-ribose 1-diphosphate is bound by residues Arg-79, Arg-104, and 131 to 139; that span reads DPMLATGGS. Uracil is bound by residues Ile-194 and 199–201; that span reads GDA. 5-phospho-alpha-D-ribose 1-diphosphate is bound at residue Asp-200.

Belongs to the UPRTase family. It depends on Mg(2+) as a cofactor.

The enzyme catalyses UMP + diphosphate = 5-phospho-alpha-D-ribose 1-diphosphate + uracil. The protein operates within pyrimidine metabolism; UMP biosynthesis via salvage pathway; UMP from uracil: step 1/1. With respect to regulation, allosterically activated by GTP. Catalyzes the conversion of uracil and 5-phospho-alpha-D-ribose 1-diphosphate (PRPP) to UMP and diphosphate. This chain is Uracil phosphoribosyltransferase, found in Finegoldia magna (strain ATCC 29328 / DSM 20472 / WAL 2508) (Peptostreptococcus magnus).